The sequence spans 385 residues: 1-deoxy-D-xylulose 5-phosphate reductoisomerase (385 aa).

Positions 10, 11, 12, 13, 37, and 124 each coordinate NADPH. Position 125 (lysine 125) interacts with 1-deoxy-D-xylulose 5-phosphate. Glutamate 126 contributes to the NADPH binding site. Mn(2+) is bound at residue aspartate 150. 1-deoxy-D-xylulose 5-phosphate-binding residues include serine 151, glutamate 152, serine 176, and histidine 199. A Mn(2+)-binding site is contributed by glutamate 152. Glycine 205 provides a ligand contact to NADPH. 1-deoxy-D-xylulose 5-phosphate-binding residues include serine 212, asparagine 217, lysine 218, and glutamate 221. Glutamate 221 contributes to the Mn(2+) binding site.

It belongs to the DXR family. The cofactor is Mg(2+). Mn(2+) is required as a cofactor.

The catalysed reaction is 2-C-methyl-D-erythritol 4-phosphate + NADP(+) = 1-deoxy-D-xylulose 5-phosphate + NADPH + H(+). It functions in the pathway isoprenoid biosynthesis; isopentenyl diphosphate biosynthesis via DXP pathway; isopentenyl diphosphate from 1-deoxy-D-xylulose 5-phosphate: step 1/6. In terms of biological role, catalyzes the NADPH-dependent rearrangement and reduction of 1-deoxy-D-xylulose-5-phosphate (DXP) to 2-C-methyl-D-erythritol 4-phosphate (MEP). In Clostridium novyi (strain NT), this protein is 1-deoxy-D-xylulose 5-phosphate reductoisomerase.